A 192-amino-acid polypeptide reads, in one-letter code: uncharacterized protein (192 aa).

This is an uncharacterized protein from Sinorhizobium fredii (strain NBRC 101917 / NGR234).